An 89-amino-acid chain; its full sequence is Small ribosomal subunit protein uS15 (89 aa).

This sequence belongs to the universal ribosomal protein uS15 family. In terms of assembly, part of the 30S ribosomal subunit. Forms a bridge to the 50S subunit in the 70S ribosome, contacting the 23S rRNA.

One of the primary rRNA binding proteins, it binds directly to 16S rRNA where it helps nucleate assembly of the platform of the 30S subunit by binding and bridging several RNA helices of the 16S rRNA. Functionally, forms an intersubunit bridge (bridge B4) with the 23S rRNA of the 50S subunit in the ribosome. In Methylobacterium nodulans (strain LMG 21967 / CNCM I-2342 / ORS 2060), this protein is Small ribosomal subunit protein uS15.